The primary structure comprises 376 residues: N-acetyldiaminopimelate deacetylase (376 aa).

Aspartate 69 is an active-site residue. Glutamate 128 functions as the Proton acceptor in the catalytic mechanism.

It belongs to the peptidase M20A family. N-acetyldiaminopimelate deacetylase subfamily.

The enzyme catalyses N-acetyl-(2S,6S)-2,6-diaminopimelate + H2O = (2S,6S)-2,6-diaminopimelate + acetate. Its pathway is amino-acid biosynthesis; L-lysine biosynthesis via DAP pathway; LL-2,6-diaminopimelate from (S)-tetrahydrodipicolinate (acetylase route): step 3/3. Functionally, catalyzes the conversion of N-acetyl-diaminopimelate to diaminopimelate and acetate. In Streptococcus pneumoniae serotype 4 (strain ATCC BAA-334 / TIGR4), this protein is N-acetyldiaminopimelate deacetylase.